We begin with the raw amino-acid sequence, 338 residues long: UDP-glucose 4-epimerase (338 aa).

NAD(+) is bound by residues 11 to 12 (YI), 31 to 36 (DNLCNS), 58 to 59 (DI), 80 to 84 (FAGLK), N99, S124, Y149, K153, and F178. Residues S124 and Y149 each coordinate substrate. Y149 functions as the Proton acceptor in the catalytic mechanism. Substrate is bound by residues N179, 199-200 (NL), 216-218 (SVF), R231, and 292-295 (RSGD).

It belongs to the NAD(P)-dependent epimerase/dehydratase family. Homodimer. It depends on NAD(+) as a cofactor.

The catalysed reaction is UDP-alpha-D-glucose = UDP-alpha-D-galactose. Its pathway is carbohydrate metabolism; galactose metabolism. Functionally, involved in the metabolism of galactose. Catalyzes the conversion of UDP-galactose (UDP-Gal) to UDP-glucose (UDP-Glc) through a mechanism involving the transient reduction of NAD. By controlling the internal galactose concentration, it may be linked to the biosynthesis of lipopolysaccharide surface molecules, which are important for the pathogenesis of H.influenzae. This Haemophilus influenzae (strain ATCC 51907 / DSM 11121 / KW20 / Rd) protein is UDP-glucose 4-epimerase (galE).